We begin with the raw amino-acid sequence, 358 residues long: Histidinol-phosphate aminotransferase (358 aa).

The residue at position 218 (Lys-218) is an N6-(pyridoxal phosphate)lysine.

The protein belongs to the class-II pyridoxal-phosphate-dependent aminotransferase family. Histidinol-phosphate aminotransferase subfamily. In terms of assembly, homodimer. Pyridoxal 5'-phosphate serves as cofactor.

The catalysed reaction is L-histidinol phosphate + 2-oxoglutarate = 3-(imidazol-4-yl)-2-oxopropyl phosphate + L-glutamate. The protein operates within amino-acid biosynthesis; L-histidine biosynthesis; L-histidine from 5-phospho-alpha-D-ribose 1-diphosphate: step 7/9. This Dehalococcoides mccartyi (strain ATCC BAA-2100 / JCM 16839 / KCTC 5957 / BAV1) protein is Histidinol-phosphate aminotransferase.